A 328-amino-acid polypeptide reads, in one-letter code: DNA-directed RNA polymerase subunit alpha (328 aa).

Residues 1 to 230 form an alpha N-terminal domain (alpha-NTD) region; that stretch reads MIQITGRKFK…IILDHFMFIE (230 aa). Positions 257–328 are alpha C-terminal domain (alpha-CTD); sequence PEDVMSKKVE…FGLSLRKGDK (72 aa).

This sequence belongs to the RNA polymerase alpha chain family. Homodimer. The RNAP catalytic core consists of 2 alpha, 1 beta, 1 beta' and 1 omega subunit. When a sigma factor is associated with the core the holoenzyme is formed, which can initiate transcription.

The enzyme catalyses RNA(n) + a ribonucleoside 5'-triphosphate = RNA(n+1) + diphosphate. In terms of biological role, DNA-dependent RNA polymerase catalyzes the transcription of DNA into RNA using the four ribonucleoside triphosphates as substrates. The polypeptide is DNA-directed RNA polymerase subunit alpha (Fervidobacterium nodosum (strain ATCC 35602 / DSM 5306 / Rt17-B1)).